Here is a 429-residue protein sequence, read N- to C-terminus: Glutamate-1-semialdehyde 2,1-aminomutase 2 (429 aa).

Position 268 is an N6-(pyridoxal phosphate)lysine (Lys268).

Belongs to the class-III pyridoxal-phosphate-dependent aminotransferase family. HemL subfamily. In terms of assembly, homodimer. It depends on pyridoxal 5'-phosphate as a cofactor.

The protein localises to the cytoplasm. It catalyses the reaction (S)-4-amino-5-oxopentanoate = 5-aminolevulinate. Its pathway is porphyrin-containing compound metabolism; protoporphyrin-IX biosynthesis; 5-aminolevulinate from L-glutamyl-tRNA(Glu): step 2/2. This Listeria monocytogenes serotype 4a (strain HCC23) protein is Glutamate-1-semialdehyde 2,1-aminomutase 2.